The chain runs to 884 residues: DNA replication licensing factor mcm2 (884 aa).

The span at 1-16 (MADSSESFNIATSPRT) shows a compositional bias: polar residues. 2 disordered regions span residues 1-61 (MADS…IGDA) and 120-151 (LYDS…EDEE). Residues 47–58 (PREEEEDGEELI) are compositionally biased toward acidic residues. A C4-type zinc finger spans residues 314 to 340 (CNKCNFILGPFFQSQNQEVKPGSCPEC). One can recognise an MCM domain in the interval 458 to 664 (IGERIFASIA…VQDEMLARFV (207 aa)). ADP is bound by residues Ser-515 and Gln-516. An Arginine finger motif is present at residues 640–643 (SRFD).

The protein belongs to the MCM family. As to quaternary structure, component of the mcm2-7 complex (RLF-M). The complex forms a toroidal hexameric ring with the proposed subunit order mcm2-mcm6-mcm4-mcm7-mcm3-mcm5. Component of the replisome complex. Component of the CMG helicase complex, composed of the mcm2-7 complex, the GINS complex and cdc45. Post-translationally, may be in a phosphorylated state in the mitotic mcm complex. Phosphorylated in the interphase mcm complex. Phosphorylated by the cdc7-dbf4 and cdc7-dbf4b complexes.

It localises to the nucleus. The protein resides in the chromosome. It carries out the reaction ATP + H2O = ADP + phosphate + H(+). Acts as a component of the MCM2-7 complex (MCM complex) which is the replicative helicase essential for 'once per cell cycle' DNA replication initiation and elongation in eukaryotic cells. Core component of CDC45-MCM-GINS (CMG) helicase, the molecular machine that unwinds template DNA during replication, and around which the replisome is built. The active ATPase sites in the MCM2-7 ring are formed through the interaction surfaces of two neighboring subunits such that a critical structure of a conserved arginine finger motif is provided in trans relative to the ATP-binding site of the Walker A box of the adjacent subunit. The six ATPase active sites, however, are likely to contribute differentially to the complex helicase activity. Required for the entry in S phase and for cell division. The sequence is that of DNA replication licensing factor mcm2 from Xenopus tropicalis (Western clawed frog).